We begin with the raw amino-acid sequence, 263 residues long: Glucosamine-6-phosphate deaminase (263 aa).

Catalysis depends on aspartate 72, which acts as the Proton acceptor; for enolization step. Aspartate 141 serves as the catalytic For ring-opening step. Histidine 143 serves as the catalytic Proton acceptor; for ring-opening step. Catalysis depends on glutamate 148, which acts as the For ring-opening step.

Belongs to the glucosamine/galactosamine-6-phosphate isomerase family. NagB subfamily.

It carries out the reaction alpha-D-glucosamine 6-phosphate + H2O = beta-D-fructose 6-phosphate + NH4(+). It functions in the pathway amino-sugar metabolism; N-acetylneuraminate degradation; D-fructose 6-phosphate from N-acetylneuraminate: step 5/5. Its activity is regulated as follows. Allosterically activated by N-acetylglucosamine 6-phosphate (GlcNAc6P). Functionally, catalyzes the reversible isomerization-deamination of glucosamine 6-phosphate (GlcN6P) to form fructose 6-phosphate (Fru6P) and ammonium ion. This Porphyromonas gingivalis (strain ATCC BAA-308 / W83) protein is Glucosamine-6-phosphate deaminase.